Here is a 383-residue protein sequence, read N- to C-terminus: uncharacterized protein (383 aa).

Disordered regions lie at residues 1 to 30, 114 to 144, 262 to 289, and 341 to 360; these read MDLC…PTCT, ETKP…STAS, GEKR…ARTS, and AKDP…NSPQ. Residues 10 to 26 show a composition bias toward acidic residues; that stretch reads DLENGENNEIQSTEETE. The span at 128-141 shows a compositional bias: low complexity; it reads SSPSQTQAAPQGPS. A compositionally biased stretch (basic and acidic residues) spans 262–271; the sequence is GEKRPSELAK.

This is an uncharacterized protein from Macaca fascicularis (Crab-eating macaque).